The chain runs to 154 residues: Myoglobin (154 aa).

The Globin domain occupies 2 to 148; the sequence is GLSDGEWQLV…FRNDIAAKYK (147 aa). At serine 4 the chain carries Phosphoserine. Residue histidine 65 participates in nitrite binding. Position 65 (histidine 65) interacts with O2. Threonine 68 is modified (phosphothreonine). Histidine 94 serves as a coordination point for heme b.

This sequence belongs to the globin family. Monomeric.

The protein resides in the cytoplasm. It is found in the sarcoplasm. The enzyme catalyses Fe(III)-heme b-[protein] + nitric oxide + H2O = Fe(II)-heme b-[protein] + nitrite + 2 H(+). It carries out the reaction H2O2 + AH2 = A + 2 H2O. Monomeric heme protein which primary function is to store oxygen and facilitate its diffusion within muscle tissues. Reversibly binds oxygen through a pentacoordinated heme iron and enables its timely and efficient release as needed during periods of heightened demand. Depending on the oxidative conditions of tissues and cells, and in addition to its ability to bind oxygen, it also has a nitrite reductase activity whereby it regulates the production of bioactive nitric oxide. Under stress conditions, like hypoxia and anoxia, it also protects cells against reactive oxygen species thanks to its pseudoperoxidase activity. This is Myoglobin (MB) from Ondatra zibethicus (Muskrat).